Here is a 293-residue protein sequence, read N- to C-terminus: Serine/threonine-protein phosphatase 2A catalytic subunit beta isoform (293 aa).

Asp41, His43, Asp69, and Asn101 together coordinate Mn(2+). His102 acts as the Proton donor in catalysis. Mn(2+) is bound by residues His151 and His225. Tyr291 carries the phosphotyrosine modification. A Leucine methyl ester modification is found at Leu293.

It belongs to the PPP phosphatase family. PP-1 subfamily. As to quaternary structure, found in a complex with at least ARL2, PPP2CB, PPP2R1A, PPP2R2A, PPP2R5E and TBCD. Interacts with TBCD. PP2A consists of a common heterodimeric core enzyme (composed of a 36 kDa catalytic subunit (subunit C) and a 65 kDa constant regulatory subunit (PR65) (subunit A)) that associates with a variety of regulatory subunits. Proteins that associate with the core dimer include three families of regulatory subunits B (the R2/B/PR55/B55, R3/B''/PR72/PR130/PR59 and R5/B'/B56 families), the 48 kDa variable regulatory subunit, viral proteins, and cell signaling molecules. Binds PPME1. May indirectly interact with SGO1, most probably through regulatory B56 subunits. Interacts with CTTNBP2NL. Interacts with PTPA. Part of the core of STRIPAK complexes composed of PP2A catalytic and scaffolding subunits, the striatins (PP2A regulatory subunits), the striatin-associated proteins MOB4, STRIP1 and STRIP2, PDCD10 and members of the STE20 kinases, such as STK24 and STK26. Mn(2+) serves as cofactor. In terms of processing, reversibly methyl esterified on Leu-293 by leucine carboxyl methyltransferase 1 (Lcmt1) and protein phosphatase methylesterase 1 (PPME1). Carboxyl methylation influences the affinity of the catalytic subunit for the different regulatory subunits, thereby modulating the PP2A holoenzyme's substrate specificity, enzyme activity and cellular localization. Phosphorylation of either threonine (by autophosphorylation-activated protein kinase) or tyrosine results in inactivation of the phosphatase. Auto-dephosphorylation has been suggested as a mechanism for reactivation. Post-translationally, may be monoubiquitinated by NOSIP.

The protein resides in the cytoplasm. It localises to the nucleus. It is found in the chromosome. The protein localises to the centromere. Its subcellular location is the cytoskeleton. The protein resides in the spindle pole. It carries out the reaction O-phospho-L-seryl-[protein] + H2O = L-seryl-[protein] + phosphate. The enzyme catalyses O-phospho-L-threonyl-[protein] + H2O = L-threonyl-[protein] + phosphate. Its function is as follows. Catalytic subunit of protein phosphatase 2A (PP2A), a serine/threonine phosphatase involved in the regulation of a wide variety of enzymes, signal transduction pathways, and cellular events. PP2A can modulate the activity of phosphorylase B kinase, casein kinase 2, mitogen-stimulated S6 kinase, and MAP-2 kinase. Part of the striatin-interacting phosphatase and kinase (STRIPAK) complexes. STRIPAK complexes have critical roles in protein (de)phosphorylation and are regulators of multiple signaling pathways including Hippo, MAPK, nuclear receptor and cytoskeleton remodeling. Different types of STRIPAK complexes are involved in a variety of biological processes such as cell growth, differentiation, apoptosis, metabolism and immune regulation. The sequence is that of Serine/threonine-protein phosphatase 2A catalytic subunit beta isoform (PPP2CB) from Sus scrofa (Pig).